Here is a 197-residue protein sequence, read N- to C-terminus: Protein GrpE (197 aa).

The segment at 1-41 (MSSKEQKTPEGQAPEEIITEQHEEVEAVEPDASAEQVDPRD) is disordered.

It belongs to the GrpE family. Homodimer.

Its subcellular location is the cytoplasm. Functionally, participates actively in the response to hyperosmotic and heat shock by preventing the aggregation of stress-denatured proteins, in association with DnaK and GrpE. It is the nucleotide exchange factor for DnaK and may function as a thermosensor. Unfolded proteins bind initially to DnaJ; upon interaction with the DnaJ-bound protein, DnaK hydrolyzes its bound ATP, resulting in the formation of a stable complex. GrpE releases ADP from DnaK; ATP binding to DnaK triggers the release of the substrate protein, thus completing the reaction cycle. Several rounds of ATP-dependent interactions between DnaJ, DnaK and GrpE are required for fully efficient folding. This is Protein GrpE from Enterobacter sp. (strain 638).